Reading from the N-terminus, the 455-residue chain is MRNCCRECGLSAGHLEPEASSNCASDVKSSPDMDSVSSQDSLYLPNTVGASLEDQDLWSQFHQEGTEMIITKSGRRMFPQCKIRLFGLHPYAKYMLLVDFVPLDNFRYKWNKNQWEAAGKAEPHPPCRTYVHPDSPAPGAHWMKDPICFQKLKLTNNTLDQQGHIILHSMHRYKPRFHVVQSDDMYNSPWGLVQVFSFPETEFTSVTAYQNEKITKLKINHNPFAKGFREQERSHKRDDVLKILQQSPSKRQKRKKWEDSPEADISDFPKAICVKEESIMDPAGVYQNWVSDHEANQGLTPHSPESEGANQEQQVPTSSSNFYNKSHYRRSSQHLSSPFELGEPSSRRLTPDIATVPDSDPDSLAVFHVIPTQNSAPERTCSMNFSMEAPMKQPLRGAMYSPYGADQWLVPAQGQYRPVGYTAYPTDLSTQGAVAHPHSAMSDWSQYSLFPYSCW.

Disordered stretches follow at residues 21-40 (SNCA…SSQD), 229-262 (REQE…DSPE), and 295-346 (ANQG…EPSS). Residues 57 to 230 (LWSQFHQEGT…HNPFAKGFRE (174 aa)) constitute a DNA-binding region (T-box). Residues 229–241 (REQERSHKRDDVL) are compositionally biased toward basic and acidic residues. The span at 308 to 324 (GANQEQQVPTSSSNFYN) shows a compositional bias: polar residues.

Forms a repression complex on the promoters of the nodal/nr1 and siamois genes with the maternal factors tcf7l1/tcf3 and pouf5.1/oct-25. Interacts (via C-terminus) with tcf7l1/tcf3 (via N-terminus). Also interacts with the other POU-domain transcription factors pou5f1.2/oct-91 and pou5f1.3/oct-60. In terms of tissue distribution, uniformly distributed in stage I oocytes but becomes localized to the vegetal hemisphere by stage II and remains so thereafter throughout oogenesis and the early embryonic cleavage stages. Zygotic expression parallels blastopore formation and shifts from dorsal expression in the marginal zone of late blastula and early gastrula stages to a ventral/lateral expression at the posterior end of later stage embryos. Expression is excluded from the notochord. In tailbud and tadpole stages, expressed exclusively in a subset of posterior Rohon-Beard neurons.

The protein localises to the nucleus. Functionally, transcription factor required for both mesoderm and endoderm formation in the embryo; signaling determinants and concentration levels may determine which germ layer is formed. Acts together with beta-catenin to activate genes that are responsible for mesoderm induction including wnt-8, eomes t/bra, siamois, mix1 and sox17. Directly binds to promoter DNA. Patterns the mesoderm along the dorsoventral and posterior axis. Activates siamois gene transcription when alone or in combination with beta-catenin, but inhibits siamois transcription in combination with pou5f1.1/oct-25. This Xenopus laevis (African clawed frog) protein is T-box protein VegT-A (vegt-a).